The primary structure comprises 514 residues: Peptide chain release factor 3 (514 aa).

Positions 8–268 (KKRRTFAIIS…IFLKFAPEPH (261 aa)) constitute a tr-type G domain. GTP contacts are provided by residues 17–24 (SHPDAGKT), 85–89 (DTPGH), and 139–142 (NKLD).

This sequence belongs to the TRAFAC class translation factor GTPase superfamily. Classic translation factor GTPase family. PrfC subfamily.

Its subcellular location is the cytoplasm. In terms of biological role, increases the formation of ribosomal termination complexes and stimulates activities of RF-1 and RF-2. It binds guanine nucleotides and has strong preference for UGA stop codons. It may interact directly with the ribosome. The stimulation of RF-1 and RF-2 is significantly reduced by GTP and GDP, but not by GMP. This chain is Peptide chain release factor 3, found in Streptococcus pneumoniae (strain P1031).